A 398-amino-acid chain; its full sequence is MTGTRILELFGPAPEPPSELGRYRILSPTAGIRVSPLQLGALSIGDAWSTDLGSMDKDSAMELLDAYAAAGGNFIDTANAYQNEQSEMWIGEWMASRGNRDKMVIATKFGTDYRAHELGKGLAVNYSGNHKRSLHMSVRDSLQKLRTSWIDILYLHTWDYTTSIPELMDSLHHLVQRGDVLYLGICNTPAWVVSAANTYAQQQGKTQFSVYQGRWNPLRRELERDILPMARHFGMAVTVYDALGSGKFQSRDMLARRKDQGEGLRAIYGGQQTALEEAMSKALGVVAAQHGIESVTAVALAYLLAKAPYVFPIIGGRKIQHLHDNIEALSLRLSQEEIEYLESVGDFDPGFPYDMAGVDPADTGIATPIVAQAAPMAFVQRSKAIGYAESSKGSQMFG.

NADP(+) is bound at residue aspartate 76. Residue tyrosine 81 is the Proton donor of the active site. Histidine 156 contributes to the substrate binding site. Residues 186–187 (CN), glutamine 212, 241–251 (DALGSGKFQSR), and 317–325 (RKIQHLHDN) each bind NADP(+).

It belongs to the aldo/keto reductase family. Aldo/keto reductase 2 subfamily. In terms of assembly, homodimer.

The protein operates within secondary metabolite biosynthesis; terpenoid biosynthesis. Functionally, aldo-keto reductase; part of the gene cluster B that mediates the biosynthesis of austinol and dehydroaustinol, two fungal meroterpenoids. The first step of the pathway is the synthesis of 3,5-dimethylorsellinic acid by the polyketide synthase ausA. 3,5-dimethylorsellinic acid is then prenylated by the polyprenyl transferase ausN. Further epoxidation by the FAD-dependent monooxygenase ausM and cyclization by the probable terpene cyclase ausL lead to the formation of protoaustinoid A. Protoaustinoid A is then oxidized to spiro-lactone preaustinoid A3 by the combined action of the FAD-binding monooxygenases ausB and ausC, and the dioxygenase ausE. Acid-catalyzed keto-rearrangement and ring contraction of the tetraketide portion of preaustinoid A3 by ausJ lead to the formation of preaustinoid A4. The aldo-keto reductase ausK, with the help of ausH, is involved in the next step by transforming preaustinoid A4 into isoaustinone which is in turn hydroxylated by the P450 monooxygenase ausI to form austinolide. Finally, the cytochrome P450 monooxygenase ausG modifies austinolide to austinol. Austinol can be further modified to dehydroaustinol which forms a diffusible complex with diorcinol that initiates conidiation. Due to genetic rearrangements of the clusters and the subsequent loss of some enzymes, the end products of the Emericella nidulans austinoid biosynthesis clusters are austinol and dehydroaustinol, even if additional enzymes, such as the O-acetyltransferase ausQ and the cytochrome P450 monooxygenase ausR are still functional. In Emericella nidulans (strain FGSC A4 / ATCC 38163 / CBS 112.46 / NRRL 194 / M139) (Aspergillus nidulans), this protein is Aldo-keto reductase ausK.